Here is a 231-residue protein sequence, read N- to C-terminus: Large ribosomal subunit protein uL1 (231 aa).

Belongs to the universal ribosomal protein uL1 family. As to quaternary structure, part of the 50S ribosomal subunit.

Functionally, binds directly to 23S rRNA. The L1 stalk is quite mobile in the ribosome, and is involved in E site tRNA release. Protein L1 is also a translational repressor protein, it controls the translation of the L11 operon by binding to its mRNA. The polypeptide is Large ribosomal subunit protein uL1 (Shouchella clausii (strain KSM-K16) (Alkalihalobacillus clausii)).